The primary structure comprises 125 residues: MORF4 family-associated protein 1 (125 aa).

The disordered stretch occupies residues 76–99 (ESALNHLQGAGGAEPRGPRAEKAD). A coiled-coil region spans residues 94 to 124 (RAEKADEKAQEMAKMAEMLVQLVRRIEKSES).

Belongs to the MORF4 family-associated protein family. Found in a complex composed of MORF4L1, MRFAP1 and RB1. Interacts via its N-terminus with MORF4L1. Interacts with CSTB and MORF4L2.

The protein resides in the nucleus. Its subcellular location is the cytoplasm. The protein localises to the perinuclear region. The protein is MORF4 family-associated protein 1 of Rattus norvegicus (Rat).